Reading from the N-terminus, the 129-residue chain is Protein Wnt-6 (129 aa).

Intrachain disulfides connect Cys3/Cys17, Cys5/Cys12, Cys75/Cys106, Cys91/Cys101, and Cys128/Cys129. Ser9 carries O-palmitoleoyl serine; by PORCN lipidation. Asn92 carries N-linked (GlcNAc...) asparagine glycosylation.

Belongs to the Wnt family. Post-translationally, palmitoleoylation is required for efficient binding to frizzled receptors. Depalmitoleoylation leads to Wnt signaling pathway inhibition. In terms of tissue distribution, at tailbud: dorsal, punctate; in adult: brain and heart.

The protein resides in the secreted. It is found in the extracellular space. Its subcellular location is the extracellular matrix. In terms of biological role, ligand for members of the frizzled family of seven transmembrane receptors. Probable developmental protein. May be a signaling molecule which affects the development of discrete regions of tissues. Is likely to signal over only few cell diameters. The sequence is that of Protein Wnt-6 (wnt6) from Xenopus laevis (African clawed frog).